Here is a 63-residue protein sequence, read N- to C-terminus: Prokaryotic ubiquitin-like protein Pup (63 aa).

The tract at residues 1–35 is disordered; sequence MSGQQSQINAGGGNGQGGDTPEFDAGQVSINSAGT. The ARC ATPase binding stretch occupies residues 19–57; sequence DTPEFDAGQVSINSAGTDDLLDEIDGLLESNAEEFVRSY. Glu-63 participates in a covalent cross-link: Isoglutamyl lysine isopeptide (Glu-Lys) (interchain with K-? in acceptor proteins).

The protein belongs to the prokaryotic ubiquitin-like protein family. Strongly interacts with the proteasome-associated ATPase ARC through a hydrophobic interface; the interacting region of Pup lies in its C-terminal half. There is one Pup binding site per ARC hexamer ring.

Its pathway is protein degradation; proteasomal Pup-dependent pathway. Functionally, protein modifier that is covalently attached to lysine residues of substrate proteins, thereby targeting them for proteasomal degradation. The tagging system is termed pupylation. The chain is Prokaryotic ubiquitin-like protein Pup from Corynebacterium aurimucosum (strain ATCC 700975 / DSM 44827 / CIP 107346 / CN-1) (Corynebacterium nigricans).